The sequence spans 267 residues: Undecaprenyl-diphosphatase (267 aa).

A run of 7 helical transmembrane segments spans residues 1 to 21 (MTLF…FLPV), 49 to 69 (VGTL…AVAG), 83 to 103 (AFLA…GLAL), 111 to 131 (ALRS…VLYW), 190 to 210 (MLMS…EVAA), 219 to 239 (DAAI…TLMM), and 245 to 265 (VSFT…LIIA).

This sequence belongs to the UppP family.

The protein localises to the cell inner membrane. The enzyme catalyses di-trans,octa-cis-undecaprenyl diphosphate + H2O = di-trans,octa-cis-undecaprenyl phosphate + phosphate + H(+). In terms of biological role, catalyzes the dephosphorylation of undecaprenyl diphosphate (UPP). Confers resistance to bacitracin. In Dinoroseobacter shibae (strain DSM 16493 / NCIMB 14021 / DFL 12), this protein is Undecaprenyl-diphosphatase.